The primary structure comprises 282 residues: 2,3,4,5-tetrahydropyridine-2,6-dicarboxylate N-succinyltransferase (282 aa).

Substrate contacts are provided by arginine 109 and aspartate 146.

The protein belongs to the transferase hexapeptide repeat family. Homotrimer.

The protein localises to the cytoplasm. The catalysed reaction is (S)-2,3,4,5-tetrahydrodipicolinate + succinyl-CoA + H2O = (S)-2-succinylamino-6-oxoheptanedioate + CoA. It participates in amino-acid biosynthesis; L-lysine biosynthesis via DAP pathway; LL-2,6-diaminopimelate from (S)-tetrahydrodipicolinate (succinylase route): step 1/3. The sequence is that of 2,3,4,5-tetrahydropyridine-2,6-dicarboxylate N-succinyltransferase from Bartonella henselae (strain ATCC 49882 / DSM 28221 / CCUG 30454 / Houston 1) (Rochalimaea henselae).